A 1146-amino-acid chain; its full sequence is Nucleolar protein 6 (1146 aa).

The segment at 1-48 (MGPAPAGEQLRGATGEPEVMEPALEGTGKEGKKASSRKRTLAEPPAKG) is disordered. Ser-56 bears the Phosphoserine mark. A coiled-coil region spans residues 83-114 (LLRLQVEELLKEVRLSEKKKDRIDAFLREVNQ). Phosphoserine occurs at positions 283, 289, and 811.

Belongs to the NRAP family. In terms of assembly, part of the small subunit (SSU) processome, composed of more than 70 proteins and the RNA chaperone small nucleolar RNA (snoRNA) U3. Interacts with RRP7A; required for NOL6 localization to nucleolus.

The protein localises to the nucleus. Its subcellular location is the nucleolus. The protein resides in the chromosome. Functionally, part of the small subunit (SSU) processome, first precursor of the small eukaryotic ribosomal subunit. During the assembly of the SSU processome in the nucleolus, many ribosome biogenesis factors, an RNA chaperone and ribosomal proteins associate with the nascent pre-rRNA and work in concert to generate RNA folding, modifications, rearrangements and cleavage as well as targeted degradation of pre-ribosomal RNA by the RNA exosome. In Homo sapiens (Human), this protein is Nucleolar protein 6.